Reading from the N-terminus, the 317-residue chain is Biotin synthase (317 aa).

A Radical SAM core domain is found at 42-260 (NRIQLSTLLS…IAVTRLCMPK (219 aa)). [4Fe-4S] cluster-binding residues include cysteine 57, cysteine 61, and cysteine 64. 4 residues coordinate [2Fe-2S] cluster: cysteine 101, cysteine 132, cysteine 192, and arginine 264.

This sequence belongs to the radical SAM superfamily. Biotin synthase family. As to quaternary structure, homodimer. Requires [4Fe-4S] cluster as cofactor. The cofactor is [2Fe-2S] cluster.

The catalysed reaction is (4R,5S)-dethiobiotin + (sulfur carrier)-SH + 2 reduced [2Fe-2S]-[ferredoxin] + 2 S-adenosyl-L-methionine = (sulfur carrier)-H + biotin + 2 5'-deoxyadenosine + 2 L-methionine + 2 oxidized [2Fe-2S]-[ferredoxin]. It functions in the pathway cofactor biosynthesis; biotin biosynthesis; biotin from 7,8-diaminononanoate: step 2/2. Its function is as follows. Catalyzes the conversion of dethiobiotin (DTB) to biotin by the insertion of a sulfur atom into dethiobiotin via a radical-based mechanism. This Thiobacillus denitrificans (strain ATCC 25259 / T1) protein is Biotin synthase.